Consider the following 332-residue polypeptide: MKTLGEFIVEKQHEFSHATGELTALLSAIKLGAKIIHRDINKAGLVDILGASGAENVQGEVQQKLDLFANEKLKAALKARDIVAGIASEEEDEIVVFEGCEHAKYVVLMDPLDGSSNIDVNVSVGTIFSIYRRVTPVGTPVTEEDFLQPGNKQVAAGYVVYGSSTMLVYTTGCGVHAFTYDPSLGVFCLCQERMRFPEKGNTYSINEGNYIKFPNGVKKYIKFCQEEDKSTNRPYTSRYIGSLVADFHRNLLKGGIYLYPSTASHPEGKLRLLYECNPMAFLAEQAGGKASDGKERILDITPESLHQRRPFFVGTDHMVEDVERFIREFPDA.

The Mg(2+) site is built by glutamate 89, aspartate 110, leucine 112, and aspartate 113. Substrate contacts are provided by residues 113-116, asparagine 206, tyrosine 239, 257-259, and lysine 269; these read DGSS and YLY. A Mg(2+)-binding site is contributed by glutamate 275.

It belongs to the FBPase class 1 family. Homotetramer. Requires Mg(2+) as cofactor.

The protein localises to the cytoplasm. The enzyme catalyses beta-D-fructose 1,6-bisphosphate + H2O = beta-D-fructose 6-phosphate + phosphate. Its pathway is carbohydrate biosynthesis; gluconeogenesis. The protein is Fructose-1,6-bisphosphatase class 1 of Citrobacter koseri (strain ATCC BAA-895 / CDC 4225-83 / SGSC4696).